We begin with the raw amino-acid sequence, 513 residues long: ATP synthase subunit alpha (513 aa).

169 to 176 lines the ATP pocket; the sequence is GDRQTGKT.

Belongs to the ATPase alpha/beta chains family. As to quaternary structure, F-type ATPases have 2 components, CF(1) - the catalytic core - and CF(0) - the membrane proton channel. CF(1) has five subunits: alpha(3), beta(3), gamma(1), delta(1), epsilon(1). CF(0) has three main subunits: a(1), b(2) and c(9-12). The alpha and beta chains form an alternating ring which encloses part of the gamma chain. CF(1) is attached to CF(0) by a central stalk formed by the gamma and epsilon chains, while a peripheral stalk is formed by the delta and b chains.

It localises to the cell inner membrane. The catalysed reaction is ATP + H2O + 4 H(+)(in) = ADP + phosphate + 5 H(+)(out). Its function is as follows. Produces ATP from ADP in the presence of a proton gradient across the membrane. The alpha chain is a regulatory subunit. This chain is ATP synthase subunit alpha, found in Cupriavidus pinatubonensis (strain JMP 134 / LMG 1197) (Cupriavidus necator (strain JMP 134)).